We begin with the raw amino-acid sequence, 268 residues long: Imidazole glycerol phosphate synthase subunit HisF (268 aa).

Catalysis depends on residues Asp-12 and Asp-131.

This sequence belongs to the HisA/HisF family. In terms of assembly, heterodimer of HisH and HisF.

The protein resides in the cytoplasm. The enzyme catalyses 5-[(5-phospho-1-deoxy-D-ribulos-1-ylimino)methylamino]-1-(5-phospho-beta-D-ribosyl)imidazole-4-carboxamide + L-glutamine = D-erythro-1-(imidazol-4-yl)glycerol 3-phosphate + 5-amino-1-(5-phospho-beta-D-ribosyl)imidazole-4-carboxamide + L-glutamate + H(+). It functions in the pathway amino-acid biosynthesis; L-histidine biosynthesis; L-histidine from 5-phospho-alpha-D-ribose 1-diphosphate: step 5/9. Its function is as follows. IGPS catalyzes the conversion of PRFAR and glutamine to IGP, AICAR and glutamate. The HisF subunit catalyzes the cyclization activity that produces IGP and AICAR from PRFAR using the ammonia provided by the HisH subunit. This chain is Imidazole glycerol phosphate synthase subunit HisF, found in Salinibacter ruber (strain DSM 13855 / M31).